A 390-amino-acid chain; its full sequence is Na(+)/H(+) antiporter NhaA 2 (390 aa).

The next 11 membrane-spanning stretches (helical) occupy residues 23 to 43, 63 to 83, 100 to 120, 129 to 149, 158 to 178, 181 to 201, 208 to 228, 265 to 285, 293 to 313, 331 to 351, and 362 to 382; these read IVLI…LAAA, LHLW…GLEI, LPVL…LAIT, GWAI…ALVG, LFLL…IALF, SGLK…LVLV, ALLP…HSGI, GFVI…GADF, LGIA…SILV, LWGI…IAGL, and EAKL…LLVL.

Belongs to the NhaA Na(+)/H(+) (TC 2.A.33) antiporter family.

The protein localises to the cell inner membrane. The enzyme catalyses Na(+)(in) + 2 H(+)(out) = Na(+)(out) + 2 H(+)(in). Functionally, na(+)/H(+) antiporter that extrudes sodium in exchange for external protons. This chain is Na(+)/H(+) antiporter NhaA 2, found in Novosphingobium aromaticivorans (strain ATCC 700278 / DSM 12444 / CCUG 56034 / CIP 105152 / NBRC 16084 / F199).